The primary structure comprises 1286 residues: X-linked retinitis pigmentosa GTPase regulator-interacting protein 1 (1286 aa).

The tract at residues 144–193 is disordered; that stretch reads QVGHRQLHTAGAPVPEKPKRGPRDRLSYTAPPSFKEHATNENRGEVASKP. Composition is skewed to basic and acidic residues over residues 159–169 and 177–189; these read EKPKRGPRDRL and FKEH…RGEV. Residues 294 to 584 are a coiled coil; sequence KAQLTEVQEA…LEGILRSHDL (291 aa). A C2 domain is found at 781-906; the sequence is GGRKAQEEEF…AKNESIKGDF (126 aa). Disordered stretches follow at residues 934-1008 and 1058-1108; these read SFLK…RKHG and EEEE…PMSQ. 3 stretches are compositionally biased toward basic and acidic residues: residues 940–960, 988–998, and 1070–1084; these read AQTK…EEKA, HGGERKEKEHQ, and KQKE…KESS. The segment covering 1085–1096 has biased composition (polar residues); sequence EQGSEVSEAQTT. Residues 1091 to 1281 form an interaction with RPGR region; that stretch reads SEAQTTDSDD…VLHAIYKEMT (191 aa).

Belongs to the RPGRIP1 family. As to quaternary structure, forms homodimers and elongated homopolymers. Interacts with RPGR. Interacts with NPHP4. Interacts with NEK4. Interacts with SPATA7. Interacts with CEP290/NPHP6; mediating the association between RPGR and CEP290/NPHP6. As to expression, strong expression in retina, with weaker expression in testis. Expressed in other neurons such as amacrine cells. Colocalizes with RGPR in the outer segment of rod photoreceptors and cone outer segments.

It localises to the cell projection. Its subcellular location is the cilium. May function as scaffolding protein. Required for normal location of RPGR at the connecting cilium of photoreceptor cells. Required for normal disk morphogenesis and disk organization in the outer segment of photoreceptor cells and for survival of photoreceptor cells. The polypeptide is X-linked retinitis pigmentosa GTPase regulator-interacting protein 1 (RPGRIP1) (Homo sapiens (Human)).